Consider the following 149-residue polypeptide: Calmodulin (149 aa).

Alanine 2 is subject to N-acetylalanine. 4 EF-hand domains span residues 8 to 43, 44 to 79, 81 to 116, and 117 to 149; these read EQIA…LGQN, PTEA…KMKD, DTEE…LGEK, and LTDE…MMAK. Ca(2+) is bound by residues aspartate 21, aspartate 23, aspartate 25, threonine 27, glutamate 32, aspartate 57, aspartate 59, asparagine 61, threonine 63, glutamate 68, aspartate 94, aspartate 96, asparagine 98, and glutamate 105. At lysine 116 the chain carries N6,N6,N6-trimethyllysine. Ca(2+)-binding residues include aspartate 130, aspartate 132, aspartate 134, histidine 136, and glutamate 141.

It belongs to the calmodulin family.

Its function is as follows. Calmodulin mediates the control of a large number of enzymes, ion channels and other proteins by Ca(2+). Among the enzymes to be stimulated by the calmodulin-Ca(2+) complex are a number of protein kinases and phosphatases. In Stylonychia lemnae (Ciliate), this protein is Calmodulin.